The chain runs to 540 residues: Glucose-6-phosphate isomerase (540 aa).

Glu-346 acts as the Proton donor in catalysis. Active-site residues include His-377 and Lys-505.

Belongs to the GPI family.

It is found in the cytoplasm. It catalyses the reaction alpha-D-glucose 6-phosphate = beta-D-fructose 6-phosphate. It participates in carbohydrate biosynthesis; gluconeogenesis. The protein operates within carbohydrate degradation; glycolysis; D-glyceraldehyde 3-phosphate and glycerone phosphate from D-glucose: step 2/4. Catalyzes the reversible isomerization of glucose-6-phosphate to fructose-6-phosphate. The sequence is that of Glucose-6-phosphate isomerase from Francisella tularensis subsp. mediasiatica (strain FSC147).